The primary structure comprises 581 residues: Sulfate adenylyltransferase (581 aa).

The interval 1–176 (MANAPHGGVL…VQAIQAPTHF (176 aa)) is N-terminal. The segment at 177-401 (DYVPLRFTPA…LRESYPPRPQ (225 aa)) is catalytic. Gln-204 contributes to the sulfate binding site. ATP is bound by residues 204–207 (QTRN) and 298–301 (GRDH). Catalysis depends on residues Thr-205, Arg-206, and Asn-207. Arg-206 is a binding site for sulfate. Ala-302 provides a ligand contact to sulfate. ATP is bound at residue Met-340. The tract at residues 402 to 581 (QGFTILLTGL…IMILESQNLV (180 aa)) is allosteric regulation domain; adenylyl-sulfate kinase-like. 3'-phosphoadenylyl sulfate-binding positions include 441-444 (EELR), 486-487 (TA), and Arg-526.

In the N-terminal section; belongs to the sulfate adenylyltransferase family. The protein in the C-terminal section; belongs to the APS kinase family. Homohexamer. Dimer of trimers.

The protein localises to the cytoplasm. The enzyme catalyses sulfate + ATP + H(+) = adenosine 5'-phosphosulfate + diphosphate. The protein operates within sulfur metabolism; hydrogen sulfide biosynthesis; sulfite from sulfate: step 1/3. With respect to regulation, allosterically inhibited by 3'-phosphoadenosine 5'-phosphosulfate (PAPS). Catalyzes the first intracellular reaction of sulfate assimilation, forming adenosine-5'-phosphosulfate (APS) from inorganic sulfate and ATP. Plays an important role in sulfate activation as a component of the biosynthesis pathway of sulfur-containing amino acids. This chain is Sulfate adenylyltransferase, found in Cryptococcus neoformans var. neoformans serotype D (strain B-3501A) (Filobasidiella neoformans).